The chain runs to 343 residues: N-acetyl-gamma-glutamyl-phosphate reductase (343 aa).

The active site involves cysteine 150.

This sequence belongs to the NAGSA dehydrogenase family. Type 1 subfamily.

The protein localises to the cytoplasm. The catalysed reaction is N-acetyl-L-glutamate 5-semialdehyde + phosphate + NADP(+) = N-acetyl-L-glutamyl 5-phosphate + NADPH + H(+). It functions in the pathway amino-acid biosynthesis; L-arginine biosynthesis; N(2)-acetyl-L-ornithine from L-glutamate: step 3/4. Its function is as follows. Catalyzes the NADPH-dependent reduction of N-acetyl-5-glutamyl phosphate to yield N-acetyl-L-glutamate 5-semialdehyde. This is N-acetyl-gamma-glutamyl-phosphate reductase from Nitrosococcus oceani (strain ATCC 19707 / BCRC 17464 / JCM 30415 / NCIMB 11848 / C-107).